The primary structure comprises 517 residues: Phospholipase C C (517 aa).

A signal peptide (tat-type signal) is located at residues 1–39; it reads MVSQGAFAGMSRRAFLAKAAGAGAAAVLTDWAAPVIEKA.

Belongs to the bacterial phospholipase C family. Post-translationally, predicted to be exported by the Tat system. The position of the signal peptide cleavage has not been experimentally proven.

The protein localises to the secreted. Its subcellular location is the cell wall. It catalyses the reaction a 1,2-diacyl-sn-glycero-3-phosphocholine + H2O = phosphocholine + a 1,2-diacyl-sn-glycerol + H(+). The enzyme catalyses 1,2-dihexadecanoyl-sn-glycero-3-phosphocholine + H2O = 1,2-dihexadecanoyl-sn-glycerol + phosphocholine + H(+). Involved in virulence. Induces cytotoxic effects on mouse macrophage cell lines, via direct or indirect enzymatic hydrolysis of cell membrane phospholipids. Hydrolyzes phosphatidylcholine. Does not have hemolytic activity. This chain is Phospholipase C C, found in Mycobacterium tuberculosis (strain ATCC 25618 / H37Rv).